The primary structure comprises 94 residues: Co-chaperonin GroES (94 aa).

The protein belongs to the GroES chaperonin family. In terms of assembly, heptamer of 7 subunits arranged in a ring. Interacts with the chaperonin GroEL.

The protein localises to the cytoplasm. Together with the chaperonin GroEL, plays an essential role in assisting protein folding. The GroEL-GroES system forms a nano-cage that allows encapsulation of the non-native substrate proteins and provides a physical environment optimized to promote and accelerate protein folding. GroES binds to the apical surface of the GroEL ring, thereby capping the opening of the GroEL channel. The chain is Co-chaperonin GroES from Ehrlichia chaffeensis (strain ATCC CRL-10679 / Arkansas).